The chain runs to 315 residues: Ribose-phosphate pyrophosphokinase (315 aa).

Residues D37–E39 and R96–Q97 contribute to the ATP site. 2 residues coordinate Mg(2+): H131 and D170. K194 is an active-site residue. Residues R196, D220, and D224–T228 each bind D-ribose 5-phosphate.

It belongs to the ribose-phosphate pyrophosphokinase family. Class I subfamily. In terms of assembly, homohexamer. Mg(2+) serves as cofactor.

Its subcellular location is the cytoplasm. It catalyses the reaction D-ribose 5-phosphate + ATP = 5-phospho-alpha-D-ribose 1-diphosphate + AMP + H(+). The protein operates within metabolic intermediate biosynthesis; 5-phospho-alpha-D-ribose 1-diphosphate biosynthesis; 5-phospho-alpha-D-ribose 1-diphosphate from D-ribose 5-phosphate (route I): step 1/1. Its function is as follows. Involved in the biosynthesis of the central metabolite phospho-alpha-D-ribosyl-1-pyrophosphate (PRPP) via the transfer of pyrophosphoryl group from ATP to 1-hydroxyl of ribose-5-phosphate (Rib-5-P). The protein is Ribose-phosphate pyrophosphokinase of Buchnera aphidicola subsp. Acyrthosiphon pisum (strain APS) (Acyrthosiphon pisum symbiotic bacterium).